The primary structure comprises 408 residues: 5-hydroxytryptamine receptor 1A (408 aa).

Residues 1–32 (MDASNNTTSWNILQRGRMGPSWRRCPVSYQII) are Extracellular-facing. Residues asparagine 5 and asparagine 6 are each glycosylated (N-linked (GlcNAc...) asparagine). Residues 33-53 (ASLFLGRSFSAGIFGNACVIA) form a helical membrane-spanning segment. Residues 54 to 67 (AIALERSLQNVANY) are Cytoplasmic-facing. Residues 68-92 (LIGSLAVTDLMVSVLVLPMAAQNQV) form a helical membrane-spanning segment. At 93–101 (LNKWTLGQV) the chain is on the extracellular side. A helical transmembrane segment spans residues 102–126 (TCDIFISLDVLCCTSSILHLCAIAL). Residues cysteine 103 and cysteine 181 are joined by a disulfide bond. 2 residues coordinate serotonin: aspartate 110 and cysteine 114. The short motif at 127–129 (DRY) is the DRY motif; important for ligand-induced conformation changes element. At 127 to 146 (DRYWAITDPIDYVNKRTPRR) the chain is on the cytoplasmic side. Residues 147-168 (AAVLISITWIVGFSISIPPMLG) form a helical membrane-spanning segment. At 169–187 (WRTPEDRSDPNACRISEDP) the chain is on the extracellular side. Residues 188–210 (GYTIYSTFGAFYIPLILMLVLYG) form a helical membrane-spanning segment. Residues 211 to 333 (KIFKAARFRI…LARERKTVKT (123 aa)) are Cytoplasmic-facing. The disordered stretch occupies residues 235–255 (TCLSVSQQSPKEKQRGAQQEL). The 1D-myo-inositol 4-phosphate site is built by lysine 332, threonine 333, and glycine 339. The helical transmembrane segment at 334–357 (LGIIMGTFILCWLPFFIVALVLPF) threads the bilayer. The Extracellular portion of the chain corresponds to 358-364 (CETCHMP). Residues 365–389 (HLLFDIITWLGYSNSLLNPIIYAYF) traverse the membrane as a helical segment. The NPxxY motif; important for ligand-induced conformation changes and signaling motif lies at 382 to 386 (NPIIY). The 1D-myo-inositol 4-phosphate site is built by phenylalanine 389, asparagine 390, and lysine 391. Residues 390 to 408 (NKDFQSAFKKIIKCKFCRQ) lie on the Cytoplasmic side of the membrane.

The protein belongs to the G-protein coupled receptor 1 family. 5-hydroxytryptamine receptor subfamily. HTR1A sub-subfamily. In terms of tissue distribution, first expressed in the rostral part of the brain stem at stage 22. At later stages of development, expression is localized to serotonergic neurons. The expression pattern changes in the tadpole of stage 41 where, in addition to serotonergic neurons, expression is also localized to the inner nuclear layer (INL) of the developing retina. This expression pattern continues through to the start of metamorphosis (stage 46). In adults, expressed in the brain, in particular the telencephalon, diencephalon and mesencephalon. In the telencephalic region, expression is localized to the lateral, dorsal and medial pallium, and in the striatum, septum and amygdala. In the mesencephalic region, expression is strongest in the optic tectum and torus semicircularis with moderate levels of expression in tegmental nuclei. In diencephalon, localized to the dorsal and ventral thalamus and the preoptic area of the hypothalamus.

It is found in the cell membrane. Its activity is regulated as follows. G-protein coupled receptor activity is regulated by lipids: phosphatidylinositol 4-phosphate increases HTR1A-mediated activity. Functionally, G-protein coupled receptor for 5-hydroxytryptamine (serotonin). Also functions as a receptor for various drugs and psychoactive substances. Ligand binding causes a conformation change that triggers signaling via guanine nucleotide-binding proteins (G proteins) and modulates the activity of downstream effectors, such as adenylate cyclase. HTR1A is coupled to G(i)/G(o) G alpha proteins and mediates inhibitory neurotransmission: signaling inhibits adenylate cyclase activity and activates a phosphatidylinositol-calcium second messenger system that regulates the release of Ca(2+) ions from intracellular stores. Beta-arrestin family members regulate signaling by mediating both receptor desensitization and resensitization processes. Activation of the receptor may play a role in the exit from G0 phase and in promoting DNA synthesis. This chain is 5-hydroxytryptamine receptor 1A, found in Xenopus laevis (African clawed frog).